Here is a 65-residue protein sequence, read N- to C-terminus: Large ribosomal subunit protein uL29 (65 aa).

It belongs to the universal ribosomal protein uL29 family.

The polypeptide is Large ribosomal subunit protein uL29 (Desulforapulum autotrophicum (strain ATCC 43914 / DSM 3382 / VKM B-1955 / HRM2) (Desulfobacterium autotrophicum)).